The primary structure comprises 332 residues: Agamous-like MADS-box protein AGL66 (332 aa).

One can recognise an MADS-box domain in the interval 1-61 (MGRVKLEIKR…DRLSLFSGKT (61 aa)). A coiled-coil region spans residues 120–151 (TAINSDVEELEHEVYKLQQQLLMAEEELRKYE).

In terms of assembly, forms a heterodimer with AGL30. Expressed in pollen.

The protein resides in the nucleus. Its function is as follows. Probable transcription factor that forms a heterodimer with the MADS-box protein AGL30 and is involved in the regulation of pollen maturation at the late stages of pollen development and pollen tube growth. This Arabidopsis thaliana (Mouse-ear cress) protein is Agamous-like MADS-box protein AGL66.